Here is a 745-residue protein sequence, read N- to C-terminus: Double-stranded RNA-specific editase B2 (745 aa).

Disordered regions lie at residues 1–35 (MASVLGSGRGSGGLSSQLKCKSKRRRRRRSKRKDK) and 50–104 (SPGT…PLEE). A compositionally biased stretch (basic residues) spans 20–34 (CKSKRRRRRRSKRKD). The R-domain (ssRNA-binding) stretch occupies residues 23–35 (KRRRRRRSKRKDK). DRBM domains follow at residues 125 to 191 (TPKN…SFVQ) and 283 to 347 (NPVV…ALFD). The region spanning 414-741 (VLSSGTKCIS…VRKPPEQDQF (328 aa)) is the A to I editase domain. His-438 provides a ligand contact to Zn(2+). The active-site Proton donor is the Glu-440. Residues Cys-496 and Cys-561 each contribute to the Zn(2+) site.

In terms of tissue distribution, brain specific.

It localises to the nucleus. Its function is as follows. Lacks editing activity. It prevents the binding of other ADAR enzymes to targets in vitro, and decreases the efficiency of these enzymes. Capable of binding to dsRNA but also to ssRNA. This is Double-stranded RNA-specific editase B2 (Adarb2) from Mus musculus (Mouse).